A 163-amino-acid polypeptide reads, in one-letter code: MDWILPIAGIIAAIAFLILCIGIVVVLISVKKNLDYVAKTLDGVEGQVQGITRETTDLLHKVNRLTEDIQGKVDRLNSVVDAVKGIGDSVQNLNGSVDRVTNSITHNISQNEDKISQVVQWSNVAMEIADKWQNRYNRRGSANYKTNTVADDANHSYNSRVNK.

The helical transmembrane segment at 7-27 (IAGIIAAIAFLILCIGIVVVL) threads the bilayer.

The protein belongs to the UPF0478 family.

It is found in the cell membrane. The sequence is that of UPF0478 protein SERP1299 from Staphylococcus epidermidis (strain ATCC 35984 / DSM 28319 / BCRC 17069 / CCUG 31568 / BM 3577 / RP62A).